We begin with the raw amino-acid sequence, 397 residues long: tRNA-specific 2-thiouridylase MnmA (397 aa).

ATP-binding positions include alanine 19–serine 26 and leucine 45. Cysteine 113 functions as the Nucleophile in the catalytic mechanism. Cysteine 113 and cysteine 210 are disulfide-bonded. Glycine 137 is a binding site for ATP. Residues arginine 160 to glutamine 162 form an interaction with tRNA region. Cysteine 210 serves as the catalytic Cysteine persulfide intermediate.

Belongs to the MnmA/TRMU family.

It is found in the cytoplasm. It carries out the reaction S-sulfanyl-L-cysteinyl-[protein] + uridine(34) in tRNA + AH2 + ATP = 2-thiouridine(34) in tRNA + L-cysteinyl-[protein] + A + AMP + diphosphate + H(+). In terms of biological role, catalyzes the 2-thiolation of uridine at the wobble position (U34) of tRNA, leading to the formation of s(2)U34. The protein is tRNA-specific 2-thiouridylase MnmA of Bradyrhizobium sp. (strain ORS 278).